The primary structure comprises 174 residues: 3-hydroxydecanoyl-[acyl-carrier-protein] dehydratase (174 aa).

His71 is an active-site residue.

Belongs to the thioester dehydratase family. FabA subfamily. Homodimer.

The protein localises to the cytoplasm. It catalyses the reaction a (3R)-hydroxyacyl-[ACP] = a (2E)-enoyl-[ACP] + H2O. The enzyme catalyses (3R)-hydroxydecanoyl-[ACP] = (2E)-decenoyl-[ACP] + H2O. The catalysed reaction is (2E)-decenoyl-[ACP] = (3Z)-decenoyl-[ACP]. The protein operates within lipid metabolism; fatty acid biosynthesis. In terms of biological role, necessary for the introduction of cis unsaturation into fatty acids. Catalyzes the dehydration of (3R)-3-hydroxydecanoyl-ACP to E-(2)-decenoyl-ACP and then its isomerization to Z-(3)-decenoyl-ACP. Can catalyze the dehydratase reaction for beta-hydroxyacyl-ACPs with saturated chain lengths up to 16:0, being most active on intermediate chain length. The protein is 3-hydroxydecanoyl-[acyl-carrier-protein] dehydratase of Nitrobacter hamburgensis (strain DSM 10229 / NCIMB 13809 / X14).